We begin with the raw amino-acid sequence, 366 residues long: Transcription initiation factor IIA subunit 1 (366 aa).

Disordered stretches follow at residues 56 to 82 (LSPDSGDGSHPPPIVANNPKSHKAANA), 133 to 162 (EVNSQNPPPLHPTSAASMMQKQQQAASSGQ), and 257 to 317 (QLDG…DSAE). Over residues 146-162 (SAASMMQKQQQAASSGQ) the composition is skewed to low complexity. Residues 264–317 (SSDEDESEESDDNIDNDDDDDLDKDDDEDAEHEDAAEEEPLNSEDDVTDEDSAE) show a composition bias toward acidic residues. Phosphoserine; by TAF1 is present on residues Ser265 and Ser306.

Belongs to the TFIIA subunit 1 family. As to quaternary structure, belongs to the TFIID complex which is composed of TATA binding protein (Tbp) and a number of TBP-associated factors (Tafs). TFIIA is a heterodimer of a unprocessed large subunit 1 and a small subunit gamma. It was originally believed to be a heterotrimer of an alpha (p30), a beta (p20) and a gamma subunit (p14). Interacts with Tbp. Taf4 interacts with TFIIA-L when TFIIA-L is in complex with Tbp. The precursor form (48 kDa) is cleaved to give rise to the alpha (30 kDa) and beta (20 kDa) subunits.

Its subcellular location is the nucleus. Its function is as follows. TFIIA is a component of the transcription machinery of RNA polymerase II and plays an important role in transcriptional activation. TFIIA in a complex with TBP mediates transcriptional activity. The protein is Transcription initiation factor IIA subunit 1 (TfIIA-L) of Drosophila melanogaster (Fruit fly).